Consider the following 447-residue polypeptide: MITIKKGLDIPISGAPEQVIYEAPAVHHVALLGEEFPGLKPTMLVKVGDHVKKGQPLFENKKNPGVIFTAPASGLVTEIHRGHQRVFQALVIAQDPTIGAVSFQRYQDEELPQLSREQVQQQLLNSGMWTALRTRPYSKSPVPGSVPKAIFVTAMDTNPLAASAELIIEQQPVAFVNGLTLLSRLTDGKVYVCKGENSLPHSHVANVEERVFTGPHPAGLAGTHIHFTEPASAKKTLWHINYQDVIAIGHLFASGELYNERIVSLAGPGVSAPRLVRTQLGACLSELTRNQLLAGEQRIISGSVLSGNKAAEVHDYLGRFHLQVSVLPEGREKVFLGWIMPGQDKFSVTRSFMGHLSNVKRLVFTTAKNGSERAMVPIGNYEKIMPLDILPTLLLRDLAAGDTDSAQQLGCLELDEEDLALCTFVCPGKTEYGPLLRKCLTKIELEG.

Belongs to the NqrA family. As to quaternary structure, composed of six subunits; NqrA, NqrB, NqrC, NqrD, NqrE and NqrF.

The catalysed reaction is a ubiquinone + n Na(+)(in) + NADH + H(+) = a ubiquinol + n Na(+)(out) + NAD(+). In terms of biological role, NQR complex catalyzes the reduction of ubiquinone-1 to ubiquinol by two successive reactions, coupled with the transport of Na(+) ions from the cytoplasm to the periplasm. NqrA to NqrE are probably involved in the second step, the conversion of ubisemiquinone to ubiquinol. This Tolumonas auensis (strain DSM 9187 / NBRC 110442 / TA 4) protein is Na(+)-translocating NADH-quinone reductase subunit A.